We begin with the raw amino-acid sequence, 579 residues long: Cytochrome P450 monooxygenase ORF6 (579 aa).

Asparagine 2 carries an N-linked (GlcNAc...) asparagine glycan. A helical membrane pass occupies residues 7–29 (PLGSFVGTTLLLFILYKLVKLAY). 2 N-linked (GlcNAc...) asparagine glycosylation sites follow: asparagine 194 and asparagine 390. Cysteine 512 is a binding site for heme.

It belongs to the cytochrome P450 family. Heme is required as a cofactor.

It is found in the membrane. It functions in the pathway sesquiterpene biosynthesis. Cytochrome P450 monooxygenase; part of the gene cluster that mediates the biosynthesis of PR-toxin, a bicyclic sesquiterpene belonging to the eremophilane class and acting as a mycotoxin. The first step of the pathway is catalyzed by the aristolochene synthase which performs the cyclization of trans,trans-farnesyl diphosphate (FPP) to the bicyclic sesquiterpene aristolochene. Following the formation of aristolochene, the non-oxygenated aristolochene is converted to the trioxygenated intermediate eremofortin B, via 7-epi-neopetasone. This conversion appears to involve three enzymes, a hydroxysterol oxidase-like enzyme, the quinone-oxidase prx3 that forms the quinone-type-structure in the bicyclic nucleus of aristolochene with the C8-oxo group and the C-3 hydroxyl group, and the P450 monooxygenase ORF6 that introduces the epoxide at the double bond between carbons 1 and 2. No monoxy or dioxy-intermediates have been reported to be released to the broth, so these three early oxidative reactions may be coupled together. Eremofortin B is further oxidized by another P450 monooxygenase, that introduces a second epoxide between carbons 7 and 11 prior to acetylation to eremofortin A by the acetyltransferase ORF8. The second epoxidation may be performed by a second P450 monooxygenase. After the acetylation step, eremofortin A is converted to eremofortin C and then to PR-toxin. First the conversion of eremofortin A to eremofortin C proceeds by oxidation of the side chain of the molecule at C-12 and is catalyzed by the short-chain oxidoreductase prx1. The cytochrome P450 monooxygenase ORF6 is probably also involved in this step. The primary alcohol formed at C-12 is finally oxidized by the short-chain alcohol dehydrogenase prx4 that forms PR-toxin. This is Cytochrome P450 monooxygenase ORF6 from Penicillium roqueforti (strain FM164).